The chain runs to 510 residues: Light-independent protochlorophyllide reductase subunit B (510 aa).

Asp36 provides a ligand contact to [4Fe-4S] cluster. Asp297 serves as the catalytic Proton donor. Gly432 to Met433 is a substrate binding site.

The protein belongs to the ChlB/BchB/BchZ family. As to quaternary structure, protochlorophyllide reductase is composed of three subunits; ChlL, ChlN and ChlB. Forms a heterotetramer of two ChlB and two ChlN subunits. Requires [4Fe-4S] cluster as cofactor.

It localises to the plastid. It is found in the chloroplast. It carries out the reaction chlorophyllide a + oxidized 2[4Fe-4S]-[ferredoxin] + 2 ADP + 2 phosphate = protochlorophyllide a + reduced 2[4Fe-4S]-[ferredoxin] + 2 ATP + 2 H2O. It participates in porphyrin-containing compound metabolism; chlorophyll biosynthesis (light-independent). In terms of biological role, component of the dark-operative protochlorophyllide reductase (DPOR) that uses Mg-ATP and reduced ferredoxin to reduce ring D of protochlorophyllide (Pchlide) to form chlorophyllide a (Chlide). This reaction is light-independent. The NB-protein (ChlN-ChlB) is the catalytic component of the complex. The polypeptide is Light-independent protochlorophyllide reductase subunit B (Pinus thunbergii (Japanese black pine)).